The chain runs to 188 residues: Probable manganese efflux pump MntP (188 aa).

5 helical membrane-spanning segments follow: residues 3 to 23, 66 to 86, 106 to 128, 143 to 163, and 168 to 188; these read ITAT…ASVG, LEWN…RMII, WLLV…GLAF, ATLI…SIIG, and ILGG…HFHG.

Belongs to the MntP (TC 9.B.29) family.

It is found in the cell inner membrane. Its function is as follows. Probably functions as a manganese efflux pump. This Shigella sonnei (strain Ss046) protein is Probable manganese efflux pump MntP.